The following is a 119-amino-acid chain: Protein TusC (119 aa).

This sequence belongs to the DsrF/TusC family. As to quaternary structure, heterohexamer, formed by a dimer of trimers. The hexameric TusBCD complex contains 2 copies each of TusB, TusC and TusD. The TusBCD complex interacts with TusE.

It is found in the cytoplasm. Functionally, part of a sulfur-relay system required for 2-thiolation of 5-methylaminomethyl-2-thiouridine (mnm(5)s(2)U) at tRNA wobble positions. The sequence is that of Protein TusC from Sodalis glossinidius (strain morsitans).